A 418-amino-acid polypeptide reads, in one-letter code: Hepatic and glial cell adhesion molecule (418 aa).

The N-terminal stretch at 1 to 33 is a signal peptide; the sequence is MKRERGALSRASRALRLSPFVYLLLIQPVPLEG. The Ig-like V-type domain occupies 34–142; sequence VNITSPVRLI…GEKTINLTVD (109 aa). Residues 34–240 are Extracellular-facing; sequence VNITSPVRLI…VKITVYRRSS (207 aa). N-linked (GlcNAc...) asparagine glycosylation is found at N35, N138, N167, and N189. The Ig-like C2-type domain maps to 148 to 234; the sequence is PQVLVASTTV…QVRSLPVKIT (87 aa). C168 and C217 are disulfide-bonded. A helical membrane pass occupies residues 241–261; it reads LYIILSTGGIFLLVTLVTVCA. The Cytoplasmic segment spans residues 262-418; it reads CWKPSKKSRK…DESGQVEISA (157 aa). The disordered stretch occupies residues 271–418; it reads KKRKLEKQNS…DESGQVEISA (148 aa). Position 280 is a phosphoserine (S280). Residues 287 to 308 show a composition bias toward basic and acidic residues; it reads NDDRLKSEADTLPRSGEQERKN. A phosphoserine mark is found at S321, S352, and S379. Residues 341–358 show a composition bias toward low complexity; that stretch reads GYSVSPPVPGRSPGLPIR. A compositionally biased stretch (low complexity) spans 385–396; the sequence is SSPGRSRSSSRS.

As to quaternary structure, homodimer. Dimer formation occurs predominantly through cis interactions on the cell surface. Part of a complex containing MLC1, TRPV4, AQP4 and ATP1B1. Interacts with CLCN2. Post-translationally, N-glycosylated.

The protein localises to the cytoplasm. It is found in the cell membrane. Its function is as follows. Involved in regulating cell motility and cell-matrix interactions. May inhibit cell growth through suppression of cell proliferation. In glia, associates and targets CLCN2 at astrocytic processes and myelinated fiber tracts where it may regulate transcellular chloride flux involved in neuron excitability. In Mus musculus (Mouse), this protein is Hepatic and glial cell adhesion molecule.